Here is a 265-residue protein sequence, read N- to C-terminus: Hydroxyethylthiazole kinase 2 (265 aa).

Substrate is bound at residue M39. The ATP site is built by K115 and T168. Substrate is bound at residue G195.

The protein belongs to the Thz kinase family. Mg(2+) serves as cofactor.

It carries out the reaction 5-(2-hydroxyethyl)-4-methylthiazole + ATP = 4-methyl-5-(2-phosphooxyethyl)-thiazole + ADP + H(+). The protein operates within cofactor biosynthesis; thiamine diphosphate biosynthesis; 4-methyl-5-(2-phosphoethyl)-thiazole from 5-(2-hydroxyethyl)-4-methylthiazole: step 1/1. In terms of biological role, catalyzes the phosphorylation of the hydroxyl group of 4-methyl-5-beta-hydroxyethylthiazole (THZ). This is Hydroxyethylthiazole kinase 2 from Clostridium botulinum (strain Okra / Type B1).